Consider the following 192-residue polypeptide: NADH-quinone oxidoreductase subunit B (192 aa).

[4Fe-4S] cluster-binding residues include cysteine 71, cysteine 72, cysteine 136, and cysteine 166.

It belongs to the complex I 20 kDa subunit family. As to quaternary structure, NDH-1 is composed of 14 different subunits. Subunits NuoB, C, D, E, F, and G constitute the peripheral sector of the complex. [4Fe-4S] cluster is required as a cofactor.

It is found in the cell inner membrane. It catalyses the reaction a quinone + NADH + 5 H(+)(in) = a quinol + NAD(+) + 4 H(+)(out). Its function is as follows. NDH-1 shuttles electrons from NADH, via FMN and iron-sulfur (Fe-S) centers, to quinones in the respiratory chain. The immediate electron acceptor for the enzyme in this species is believed to be ubiquinone. Couples the redox reaction to proton translocation (for every two electrons transferred, four hydrogen ions are translocated across the cytoplasmic membrane), and thus conserves the redox energy in a proton gradient. This chain is NADH-quinone oxidoreductase subunit B, found in Sinorhizobium medicae (strain WSM419) (Ensifer medicae).